The primary structure comprises 701 residues: Elongation factor G (701 aa).

Positions Glu-8–Thr-290 constitute a tr-type G domain. GTP is bound by residues Ala-17 to Thr-24, Asp-88 to His-92, and Asn-142 to Asp-145.

Belongs to the TRAFAC class translation factor GTPase superfamily. Classic translation factor GTPase family. EF-G/EF-2 subfamily.

Its subcellular location is the cytoplasm. Functionally, catalyzes the GTP-dependent ribosomal translocation step during translation elongation. During this step, the ribosome changes from the pre-translocational (PRE) to the post-translocational (POST) state as the newly formed A-site-bound peptidyl-tRNA and P-site-bound deacylated tRNA move to the P and E sites, respectively. Catalyzes the coordinated movement of the two tRNA molecules, the mRNA and conformational changes in the ribosome. In Aeromonas hydrophila subsp. hydrophila (strain ATCC 7966 / DSM 30187 / BCRC 13018 / CCUG 14551 / JCM 1027 / KCTC 2358 / NCIMB 9240 / NCTC 8049), this protein is Elongation factor G.